A 377-amino-acid polypeptide reads, in one-letter code: Leucine aminopeptidase A (377 aa).

The first 18 residues, 1 to 18 (MRFLPCIATLAATASALA), serve as a signal peptide directing secretion. Residues 19–79 (IGDHVRSDDQ…SNKKQKLAVT (61 aa)) constitute a propeptide that is removed on maturation. Asn-87 carries an N-linked (GlcNAc...) asparagine glycan. Positions 176, 195, 234, and 261 each coordinate Zn(2+). Asn-288 carries an N-linked (GlcNAc...) asparagine glycan. Residues Cys-310 and Cys-314 are joined by a disulfide bond. His-343 contributes to the Zn(2+) binding site.

The protein belongs to the peptidase M28 family. M28E subfamily. As to quaternary structure, monomer. It depends on Zn(2+) as a cofactor.

Its subcellular location is the secreted. With respect to regulation, calcium, magnesium and manganese cations reduce peptidase activity to 20.3-51.3 percent. The metal ion chelating reagent EDTA almost completely inhibits activity. The protease inhibitor bacitracin and the aminopeptidase B inhibitor bestatin, as well as DTT and beta-mercaptoethanol act also as lap A inhibitorsD. In terms of biological role, extracellular aminopeptidase that allows assimilation of proteinaceous substrates. This chain is Leucine aminopeptidase A (lapA), found in Aspergillus oryzae (strain ATCC 42149 / RIB 40) (Yellow koji mold).